A 61-amino-acid polypeptide reads, in one-letter code: Ubiquinol-cytochrome c reductase complex assembly factor 6 (61 aa).

Residues Met-1–Gln-9 lie on the Mitochondrial matrix side of the membrane. Residues Tyr-10–Tyr-32 traverse the membrane as a helical segment. Topologically, residues Lys-33 to Ala-61 are mitochondrial intermembrane.

This sequence belongs to the UQCC6 family. Interacts with sloth1; the interaction stabilizes both components. In terms of tissue distribution, expressed in the brain.

The protein resides in the mitochondrion inner membrane. The protein localises to the mitochondrion. Functionally, required for the assembly and stability of the mitochondrial ubiquinol-cytochrome c reductase complex (complex III (CIII) or cytochrome b-c1 complex), a multisubunit transmembrane complex that is part of the mitochondrial electron transport chain (ETC) which drives oxidative phosphorylation. The sequence is that of Ubiquinol-cytochrome c reductase complex assembly factor 6 from Drosophila melanogaster (Fruit fly).